A 498-amino-acid chain; its full sequence is Phosphonates import ATP-binding protein PhnC (498 aa).

The segment at 1–27 (MPQRPEAARAGPVAGPDAASKPAPGPA) is disordered. Residues 28 to 269 (LTLRGAGRAY…DLGELYEARR (242 aa)) enclose the ABC transporter domain. 60 to 67 (GPSGAGKS) contributes to the ATP binding site. The segment at 270–498 (GAADPARAPA…LEVARAEVPP (229 aa)) is lysR substrate binding domain.

Belongs to the ABC transporter superfamily. Phosphonates importer (TC 3.A.1.9.1) family. As to quaternary structure, the complex is composed of two ATP-binding proteins (PhnC), two transmembrane proteins (PhnE) and a solute-binding protein (PhnD).

It is found in the cell inner membrane. It carries out the reaction phosphonate(out) + ATP + H2O = phosphonate(in) + ADP + phosphate + H(+). Its function is as follows. Part of the ABC transporter complex PhnCDE involved in phosphonates import. Responsible for energy coupling to the transport system. The chain is Phosphonates import ATP-binding protein PhnC from Anaeromyxobacter dehalogenans (strain 2CP-C).